Consider the following 270-residue polypeptide: MVYTATPLEKKVTVNTLRKMKADKEKFITVALYDAPMAAMAQKCGVEVVLIGDSLGMTVLGYDSTVPVTMEQMIYHIEAVARGNSRSLIIGDLPFMTYATVEQTMINATRVMQAGAHMVKMEGGAWLVDSVRMLSERGIPVCAHLGLTPQSVNKFGGFRVQGRSEEQGEQIIADALALEEAGADLLVLECIPAELGARVTQALSIPTIGIGAGIGTDAQVLVINDILGLTEFPPKFSKNFLLEAKDIPGALQKYAADVKSGVFPGPEQQF.

Mg(2+)-binding residues include Asp53 and Asp92. Residues 53 to 54 (DS), Asp92, and Lys120 each bind 3-methyl-2-oxobutanoate. Residue Glu122 participates in Mg(2+) binding. Catalysis depends on Glu189, which acts as the Proton acceptor.

The protein belongs to the PanB family. Homodecamer; pentamer of dimers. The cofactor is Mg(2+).

The protein localises to the cytoplasm. The enzyme catalyses 3-methyl-2-oxobutanoate + (6R)-5,10-methylene-5,6,7,8-tetrahydrofolate + H2O = 2-dehydropantoate + (6S)-5,6,7,8-tetrahydrofolate. It functions in the pathway cofactor biosynthesis; (R)-pantothenate biosynthesis; (R)-pantoate from 3-methyl-2-oxobutanoate: step 1/2. Catalyzes the reversible reaction in which hydroxymethyl group from 5,10-methylenetetrahydrofolate is transferred onto alpha-ketoisovalerate to form ketopantoate. In Saccharophagus degradans (strain 2-40 / ATCC 43961 / DSM 17024), this protein is 3-methyl-2-oxobutanoate hydroxymethyltransferase.